The sequence spans 417 residues: Gamma-glutamyl phosphate reductase (417 aa).

The protein belongs to the gamma-glutamyl phosphate reductase family.

The protein localises to the cytoplasm. It carries out the reaction L-glutamate 5-semialdehyde + phosphate + NADP(+) = L-glutamyl 5-phosphate + NADPH + H(+). It participates in amino-acid biosynthesis; L-proline biosynthesis; L-glutamate 5-semialdehyde from L-glutamate: step 2/2. Functionally, catalyzes the NADPH-dependent reduction of L-glutamate 5-phosphate into L-glutamate 5-semialdehyde and phosphate. The product spontaneously undergoes cyclization to form 1-pyrroline-5-carboxylate. The chain is Gamma-glutamyl phosphate reductase from Escherichia coli (strain 55989 / EAEC).